Consider the following 365-residue polypeptide: UDP-N-acetylglucosamine--N-acetylmuramyl-(pentapeptide) pyrophosphoryl-undecaprenol N-acetylglucosamine transferase (365 aa).

Residues 19–21, N131, R170, S201, I255, 274–279, and Q300 each bind UDP-N-acetyl-alpha-D-glucosamine; these read TGG and ALTVTE.

The protein belongs to the glycosyltransferase 28 family. MurG subfamily.

The protein localises to the cell inner membrane. It catalyses the reaction di-trans,octa-cis-undecaprenyl diphospho-N-acetyl-alpha-D-muramoyl-L-alanyl-D-glutamyl-meso-2,6-diaminopimeloyl-D-alanyl-D-alanine + UDP-N-acetyl-alpha-D-glucosamine = di-trans,octa-cis-undecaprenyl diphospho-[N-acetyl-alpha-D-glucosaminyl-(1-&gt;4)]-N-acetyl-alpha-D-muramoyl-L-alanyl-D-glutamyl-meso-2,6-diaminopimeloyl-D-alanyl-D-alanine + UDP + H(+). The protein operates within cell wall biogenesis; peptidoglycan biosynthesis. In terms of biological role, cell wall formation. Catalyzes the transfer of a GlcNAc subunit on undecaprenyl-pyrophosphoryl-MurNAc-pentapeptide (lipid intermediate I) to form undecaprenyl-pyrophosphoryl-MurNAc-(pentapeptide)GlcNAc (lipid intermediate II). This chain is UDP-N-acetylglucosamine--N-acetylmuramyl-(pentapeptide) pyrophosphoryl-undecaprenol N-acetylglucosamine transferase, found in Acinetobacter baumannii (strain AB307-0294).